Consider the following 395-residue polypeptide: Chorismate synthase (395 aa).

NADP(+) contacts are provided by arginine 40 and arginine 46. FMN-binding positions include 135-137 (RAS) and 256-257 (QA). Residues 272 to 283 (RRGSQAHDEMRP) are compositionally biased toward basic and acidic residues. The tract at residues 272–296 (RRGSQAHDEMRPGPDGILRSTNRAG) is disordered. FMN is bound by residues glycine 300, 315–319 (KPIST), and arginine 341.

The protein belongs to the chorismate synthase family. In terms of assembly, homotetramer. It depends on FMNH2 as a cofactor.

It catalyses the reaction 5-O-(1-carboxyvinyl)-3-phosphoshikimate = chorismate + phosphate. It participates in metabolic intermediate biosynthesis; chorismate biosynthesis; chorismate from D-erythrose 4-phosphate and phosphoenolpyruvate: step 7/7. In terms of biological role, catalyzes the anti-1,4-elimination of the C-3 phosphate and the C-6 proR hydrogen from 5-enolpyruvylshikimate-3-phosphate (EPSP) to yield chorismate, which is the branch point compound that serves as the starting substrate for the three terminal pathways of aromatic amino acid biosynthesis. This reaction introduces a second double bond into the aromatic ring system. The protein is Chorismate synthase of Rhodococcus jostii (strain RHA1).